Here is a 372-residue protein sequence, read N- to C-terminus: Protein Wnt-1 (372 aa).

The N-terminal stretch at 1 to 29 is a signal peptide; sequence MLKSTQVILIFILLISIVESLSWLALGLA. Intrachain disulfides connect cysteine 77/cysteine 88, cysteine 130/cysteine 138, and cysteine 140/cysteine 158. N-linked (GlcNAc...) asparagine glycosylation occurs at asparagine 87. A glycan (N-linked (GlcNAc...) asparagine) is linked at asparagine 187. Disulfide bonds link cysteine 225/cysteine 239, cysteine 227/cysteine 234, cysteine 301/cysteine 332, cysteine 317/cysteine 327, cysteine 331/cysteine 371, cysteine 347/cysteine 362, cysteine 349/cysteine 359, and cysteine 354/cysteine 355. Serine 231 is lipidated: O-palmitoleoyl serine; by mom-1.

The protein belongs to the Wnt family. Palmitoleoylation is required for efficient binding to frizzled receptors. Depalmitoleoylation leads to Wnt signaling pathway inhibition. As to expression, expressed in intestine, some head neurons and ventral nerve cord and pharyngeal neurons. Expressed in the tail and weakly expressed in the vulva and body wall muscles. Expressed highly in posterior dorsal and ventral muscle cells.

It localises to the secreted. It is found in the extracellular space. The protein localises to the extracellular matrix. The protein resides in the cytoplasm. Its subcellular location is the cell membrane. Ligand for members of the frizzled family of seven transmembrane receptors. Probable developmental protein. May be a signaling molecule which affects the development of discrete regions of tissues. Is likely to signal over only few cell diameters. Binds receptor tyrosine kinase cam-1. Together with Wnt ligand cwn-2, regulates the migration of CAN, ALM, BDU and HSN neurons during embryogenesis, the migration of QL and QR neuroblast descendants during larval development, and polarity of ALM neurons. Also acts with the Wnt ligand egl-20 to direct HSN neuron migration. Acts through the Wnt receptor cfz-2 to direct ALM migration. Also plays a role in axon growth and guidance in HSN and male CP neurons. In addition, together with Wnt ligand cwn-2, negatively regulates developmental neurite pruning of AIM neurons probably by acting as a ligand for receptor tyrosine kinase cam-1. Probably by activating the Wnt/Frizzled pathway, may regulate vulva development. May act redundantly with other Wnt ligands such as cwn-2 and mom-2 to control seam cell polarity. This is Protein Wnt-1 (cwn-1) from Caenorhabditis elegans.